We begin with the raw amino-acid sequence, 245 residues long: Probable phosphatase YcdX (245 aa).

Positions 7, 9, 15, 40, 73, 101, 131, 192, and 194 each coordinate Zn(2+).

This sequence belongs to the PHP family. Homotrimer. The cofactor is Zn(2+).

The sequence is that of Probable phosphatase YcdX from Escherichia fergusonii (strain ATCC 35469 / DSM 13698 / CCUG 18766 / IAM 14443 / JCM 21226 / LMG 7866 / NBRC 102419 / NCTC 12128 / CDC 0568-73).